We begin with the raw amino-acid sequence, 263 residues long: Indole-3-glycerol phosphate synthase (263 aa).

This sequence belongs to the TrpC family.

The catalysed reaction is 1-(2-carboxyphenylamino)-1-deoxy-D-ribulose 5-phosphate + H(+) = (1S,2R)-1-C-(indol-3-yl)glycerol 3-phosphate + CO2 + H2O. It functions in the pathway amino-acid biosynthesis; L-tryptophan biosynthesis; L-tryptophan from chorismate: step 4/5. This Sulfurimonas denitrificans (strain ATCC 33889 / DSM 1251) (Thiomicrospira denitrificans (strain ATCC 33889 / DSM 1251)) protein is Indole-3-glycerol phosphate synthase.